The chain runs to 193 residues: Oocyte-secreted protein 3 (193 aa).

The N-terminal stretch at 1–22 (MKDFVRLQSSFLLCTILTLSEQ) is a signal peptide. N-linked (GlcNAc...) asparagine glycans are attached at residues asparagine 64, asparagine 130, asparagine 148, asparagine 151, asparagine 165, and asparagine 178.

It belongs to the PLAC1 family.

The protein resides in the secreted. The chain is Oocyte-secreted protein 3 from Homo sapiens (Human).